Reading from the N-terminus, the 235-residue chain is Peptidyl-tRNA hydrolase (235 aa).

Tyr14 contributes to the tRNA binding site. The Proton acceptor role is filled by His19. TRNA is bound by residues Phe64, Asn66, and Asn112. Residues 186-235 (RTAPPRSSGGSPKTDKPAKATREPPPAAKPEATPEEETRSPLQRLVDKFR) form a disordered region. Residues 198–207 (KTDKPAKATR) are compositionally biased toward basic and acidic residues.

It belongs to the PTH family. In terms of assembly, monomer.

It localises to the cytoplasm. The enzyme catalyses an N-acyl-L-alpha-aminoacyl-tRNA + H2O = an N-acyl-L-amino acid + a tRNA + H(+). Functionally, hydrolyzes ribosome-free peptidyl-tRNAs (with 1 or more amino acids incorporated), which drop off the ribosome during protein synthesis, or as a result of ribosome stalling. In terms of biological role, catalyzes the release of premature peptidyl moieties from peptidyl-tRNA molecules trapped in stalled 50S ribosomal subunits, and thus maintains levels of free tRNAs and 50S ribosomes. The polypeptide is Peptidyl-tRNA hydrolase (Dinoroseobacter shibae (strain DSM 16493 / NCIMB 14021 / DFL 12)).